We begin with the raw amino-acid sequence, 83 residues long: uncharacterized protein (83 aa).

This is an uncharacterized protein from Bacillus anthracis.